The primary structure comprises 393 residues: tRNA (guanine-N(7)-)-methyltransferase (393 aa).

Glu124, Glu149, and Asp176 together coordinate S-adenosyl-L-methionine. Residue Asp232 participates in substrate binding.

Belongs to the class I-like SAM-binding methyltransferase superfamily. TrmB family.

The catalysed reaction is guanosine(46) in tRNA + S-adenosyl-L-methionine = N(7)-methylguanosine(46) in tRNA + S-adenosyl-L-homocysteine. It functions in the pathway tRNA modification; N(7)-methylguanine-tRNA biosynthesis. Catalyzes the formation of N(7)-methylguanine at position 46 (m7G46) in tRNA. This is tRNA (guanine-N(7)-)-methyltransferase from Helicobacter pylori (strain ATCC 700392 / 26695) (Campylobacter pylori).